A 172-amino-acid polypeptide reads, in one-letter code: Adrenodoxin homolog, mitochondrial (172 aa).

A mitochondrion-targeting transit peptide spans 1–16; that stretch reads MLKIVTRAGHTARISN. Residues 61 to 163 form the 2Fe-2S ferredoxin-type domain; sequence LKITFILKDG…GIRVALPQMT (103 aa). 4 residues coordinate [2Fe-2S] cluster: cysteine 98, cysteine 104, cysteine 107, and cysteine 144.

This sequence belongs to the adrenodoxin/putidaredoxin family. As to quaternary structure, interacts in its reduced state with the apo form of ISU1. It depends on [2Fe-2S] cluster as a cofactor.

It is found in the mitochondrion matrix. Its function is as follows. Iron-sulfur protein that transfers electrons in a wide variety of metabolic reactions. Involved in heme A biosynthesis and in iron-sulfur cluster assembly. Transfers electrons from adrenodoxin reductase ARH1 to heme A synthase COX15, a heme protein that catalyzes the conversion of heme O to heme A. Required for the de novo synthesis of Fe-S clusters on iron sulfur cluster assembly protein ISU1. Interact in its reduced state with ISU1 to productively deliver electrons for Fe-S cluster synthesis. Essential for coenzyme Q biosynthesis. May transfer the electrons required for the hydroxylation reaction performed by COQ6. The sequence is that of Adrenodoxin homolog, mitochondrial from Saccharomyces cerevisiae (strain ATCC 204508 / S288c) (Baker's yeast).